We begin with the raw amino-acid sequence, 355 residues long: Capsular polysaccharide biosynthesis glycosyltransferase CapH (355 aa).

This sequence belongs to the glycosyltransferase group 1 family. Glycosyltransferase 4 subfamily.

Its pathway is capsule biogenesis; capsule polysaccharide biosynthesis. Its function is as follows. Required for the biosynthesis of type 1 capsular polysaccharide. This is Capsular polysaccharide biosynthesis glycosyltransferase CapH (capH) from Staphylococcus aureus.